We begin with the raw amino-acid sequence, 845 residues long: SLIT and NTRK-like protein 2 (845 aa).

The N-terminal stretch at 1 to 21 (MLSGVWFLSVLTVAGILQTES) is a signal peptide. Residues 22 to 621 (RKTAKDICKI…LHTEVPLSVL (600 aa)) lie on the Extracellular side of the membrane. 2 disulfide bridges follow: cysteine 29-cysteine 35 and cysteine 33-cysteine 46. LRR repeat units lie at residues 63-84 (RIYQ…EFVN), 87-108 (NAVT…AFSG), 111-132 (TLKR…TFLG), 135-156 (SLEY…AFSK), 159-180 (KLKV…VFRF), and 182-203 (LLTH…GVLE). The N-linked (GlcNAc...) asparagine glycan is linked to asparagine 84. A required for interaction with PTPRD region spans residues 167-215 (DNLLLSLPSNVFRFVLLTHLDLRGNRLKVMPFAGVLEHIGGIMEIQLEE). In terms of domain architecture, LRRCT 1 spans 216–265 (NPWNCTCDLLPLKAWLDTITVFVGEIVCETPFRLHGKDVTQLTRQDLCPR). Intrachain disulfides connect cysteine 220-cysteine 243 and cysteine 222-cysteine 263. Residues 263–321 (CPRKSASDSSQRGSHADTHVQRLSPTMNPALNPTRAPKASRPPKMRNRPTPRVTVSKDR) form a disordered region. Residues 283 to 293 (QRLSPTMNPAL) show a composition bias toward polar residues. The LRRNT domain maps to 331–373 (QTKSPVPLTCPSSCVCTSQSSDNGLNVNCQERKFTNISDLQPK). LRR repeat units follow at residues 376–397 (SPKK…DLLE), 400–421 (SLDL…AFTN), 424–445 (SLRR…MFDG), 448–469 (SLQY…TFDA), 472–493 (NLQL…IFGG), and 495–516 (ALTR…GVLD). Residue asparagine 421 is glycosylated (N-linked (GlcNAc...) asparagine). Positions 529-580 (NPWDCTCDIMGLKDWTEHANSPVIINEVTCESPAKHAGEILKFLGREAICPD) constitute an LRRCT 2 domain. A helical transmembrane segment spans residues 622–642 (ILGLLVVFILSVCFGAGLFVF). Topologically, residues 643-845 (VLKRRKGVPS…LEKQTAISQL (203 aa)) are cytoplasmic. Residue tyrosine 756 is modified to Phosphotyrosine.

This sequence belongs to the SLITRK family. Interacts with PTPRD; this interaction is PTPRD splicing-dependent and may induce pre-synaptic differentiation. Interacts with NTRK2. As to expression, expressed predominantly in the cerebral cortex of the brain but also at low levels in the spinal cord and medulla. Also expressed in some astrocytic brain tumors such as astrocytomas, oligodendrogliomas, glioblastomas, gangliogliomas and primitive neuroectodermal tumors.

It localises to the membrane. The protein resides in the cell membrane. The protein localises to the cell projection. It is found in the dendrite. In terms of biological role, it is involved in synaptogenesis and promotes excitatory synapse differentiation. Suppresses neurite outgrowth. Involved in the negative regulation of NTRK2. This Homo sapiens (Human) protein is SLIT and NTRK-like protein 2 (SLITRK2).